A 272-amino-acid polypeptide reads, in one-letter code: tRNA pseudouridine synthase B (272 aa).

The Nucleophile role is filled by Asp38.

This sequence belongs to the pseudouridine synthase TruB family. Type 1 subfamily.

The enzyme catalyses uridine(55) in tRNA = pseudouridine(55) in tRNA. In terms of biological role, responsible for synthesis of pseudouridine from uracil-55 in the psi GC loop of transfer RNAs. This chain is tRNA pseudouridine synthase B, found in Campylobacter jejuni (strain RM1221).